Here is a 187-residue protein sequence, read N- to C-terminus: Elongation factor P (187 aa).

It belongs to the elongation factor P family.

It is found in the cytoplasm. The protein operates within protein biosynthesis; polypeptide chain elongation. Its function is as follows. Involved in peptide bond synthesis. Stimulates efficient translation and peptide-bond synthesis on native or reconstituted 70S ribosomes in vitro. Probably functions indirectly by altering the affinity of the ribosome for aminoacyl-tRNA, thus increasing their reactivity as acceptors for peptidyl transferase. The protein is Elongation factor P of Wolinella succinogenes (strain ATCC 29543 / DSM 1740 / CCUG 13145 / JCM 31913 / LMG 7466 / NCTC 11488 / FDC 602W) (Vibrio succinogenes).